A 332-amino-acid polypeptide reads, in one-letter code: L-lactate dehydrogenase A chain (332 aa).

NAD(+) contacts are provided by residues 29–57 and Arg-99; that span reads GAVG…IEDK. Substrate is bound by residues Arg-106, Asn-138, and Arg-169. Asn-138 contacts NAD(+). His-193 serves as the catalytic Proton acceptor. Thr-248 lines the substrate pocket.

Belongs to the LDH/MDH superfamily. LDH family. Homotetramer.

It is found in the cytoplasm. The enzyme catalyses (S)-lactate + NAD(+) = pyruvate + NADH + H(+). It functions in the pathway fermentation; pyruvate fermentation to lactate; (S)-lactate from pyruvate: step 1/1. Its function is as follows. Interconverts simultaneously and stereospecifically pyruvate and lactate with concomitant interconversion of NADH and NAD(+). In Trachemys scripta elegans (Red-eared slider turtle), this protein is L-lactate dehydrogenase A chain (LDHA).